The chain runs to 171 residues: Adenine phosphoribosyltransferase (171 aa).

Belongs to the purine/pyrimidine phosphoribosyltransferase family. As to quaternary structure, homodimer.

It localises to the cytoplasm. It catalyses the reaction AMP + diphosphate = 5-phospho-alpha-D-ribose 1-diphosphate + adenine. Its pathway is purine metabolism; AMP biosynthesis via salvage pathway; AMP from adenine: step 1/1. Its function is as follows. Catalyzes a salvage reaction resulting in the formation of AMP, that is energically less costly than de novo synthesis. In Trichlorobacter lovleyi (strain ATCC BAA-1151 / DSM 17278 / SZ) (Geobacter lovleyi), this protein is Adenine phosphoribosyltransferase.